A 396-amino-acid polypeptide reads, in one-letter code: Non-homologous end joining protein Ku (396 aa).

In terms of domain architecture, Ku spans 9–189; that stretch reads ISFGLVSIPV…DVAVRPQELS (181 aa). Residues 278-288 show a composition bias toward low complexity; sequence DGDAGPAAAGV. Residues 278–396 are disordered; that stretch reads DGDAGPAAAG…SKTPPTRRSA (119 aa). A compositionally biased stretch (basic and acidic residues) spans 294 to 312; that stretch reads DDKASDDKASDDKASDGRR. The span at 315-336 shows a compositional bias: polar residues; it reads RTSSVKGASSAPGTRSTARKTP. Over residues 337-396 the composition is skewed to low complexity; the sequence is SSTRSTAKTNAATKTPPAKTSAAKASAAKTSAAKATSSRTAPKTAPRTPTSKTPPTRRSA.

This sequence belongs to the prokaryotic Ku family. Homodimer. Interacts with LigD.

In terms of biological role, with LigD forms a non-homologous end joining (NHEJ) DNA repair enzyme, which repairs dsDNA breaks with reduced fidelity. Binds linear dsDNA with 5'- and 3'- overhangs but not closed circular dsDNA nor ssDNA. Recruits and stimulates the ligase activity of LigD. The protein is Non-homologous end joining protein Ku of Frankia casuarinae (strain DSM 45818 / CECT 9043 / HFP020203 / CcI3).